The primary structure comprises 197 residues: MLVLPSPCPQPLAFSSVETMEGPPRRTCRSPEPGPSSSIGSPQASSPPRPNHYLLIDTQGVPYTVLVDEESQREPGASGAPGQKKCYSCPVCSRVFEYMSYLQRHSITHSEVKPFECDICGKAFKRASHLARHHSIHLAGGGRPHGCPLCPRRFRDAGELAQHSRVHSGERPFQCPHCPRRFMEQNTLQKHTRWKHP.

A compositionally biased stretch (pro residues) spans 1-10 (MLVLPSPCPQ). The segment at 1-52 (MLVLPSPCPQPLAFSSVETMEGPPRRTCRSPEPGPSSSIGSPQASSPPRPNH) is disordered. Low complexity predominate over residues 35–44 (PSSSIGSPQA). 4 C2H2-type zinc fingers span residues 87-109 (YSCP…SITH), 115-137 (FECD…HSIH), 145-167 (HGCP…SRVH), and 173-196 (FQCP…RWKH).

The protein localises to the nucleus. May be involved in transcriptional regulation. This chain is Zinc finger protein 581 (ZNF581), found in Homo sapiens (Human).